Reading from the N-terminus, the 313-residue chain is LOB domain-containing protein 36 (313 aa).

An LOB domain is found at 6–107 (SPCAACKFLR…HDLENAKKEL (102 aa)). Residues 245-313 (GNFVDSPSTN…SEEGRRNVIG (69 aa)) form a disordered region. Residues 249–260 (DSPSTNNNYHTD) are compositionally biased toward polar residues. The segment covering 280–302 (PSQSSQPLPLQTQETQTQTQPNS) has biased composition (low complexity).

The protein belongs to the LOB domain-containing protein family. As to expression, expressed in trichomes, at the base of many lateral organs, including branching points of the inflorescence and floral organs and in the distal part of the pistil at stages when style and stigma start to develop. Also detected in pedicels and at the base of petals and sepals.

Its function is as follows. Controls the proximal-distal patterning in petals and the adaxial-abaxial determination of leaves. Involved in the repression of the homeobox gene BP. This is LOB domain-containing protein 36 (LBD36) from Arabidopsis thaliana (Mouse-ear cress).